A 658-amino-acid chain; its full sequence is Outer dynein arm-docking complex subunit 1 (658 aa).

Coiled-coil stretches lie at residues 11 to 156 (KEVH…RYLN), 186 to 234 (REEA…KNDE), and 303 to 380 (NFIN…TDIQ). 2 disordered regions span residues 496 to 552 (DEEE…SVSH) and 574 to 658 (GAPV…RGYN). Phosphoserine is present on residues serine 500, serine 506, serine 507, and serine 509. 4 stretches are compositionally biased toward low complexity: residues 506–519 (SSPS…QISL), 574–583 (GAPVSSRSSQ), 592–604 (TSSS…TGYL), and 621–639 (SMGS…HASS).

Belongs to the ODA1/DCC2 family. In terms of assembly, component of the outer dynein arm-docking complex along with ODAD2, ODAD3, ODAD4 and CLXN. Interacts with ODAD3. Interacts with ODAD4; this interaction may facilitate the recruitment and/or attachment of outer dynein arm docking complex proteins including ODAD1, ODAD3, and ODAD4 to ciliary axonemes. Interacts with DNAH9. Interacts with MNS1. Interacts with PIERCE1 and PIERCE2; the interactions link the outer dynein arms docking complex (ODA-DC) to the internal microtubule inner proteins (MIP) in cilium axoneme. As to expression, expressed in motile ciliated tissues.

It is found in the cytoplasm. The protein localises to the cytoskeleton. The protein resides in the cilium axoneme. In terms of biological role, component of the outer dynein arm-docking complex that mediates outer dynein arms (ODA) binding onto the doublet microtubule. Involved in mediating assembly of both ODAs and their axonemal docking complex onto ciliary microtubules. This Mus musculus (Mouse) protein is Outer dynein arm-docking complex subunit 1 (Odad1).